The following is a 280-amino-acid chain: Proteasome subunit beta 2 (280 aa).

A propeptide spans 1-52 (MTERERGQGLPAEFFAVGTASFVELLSRTAPQLLPVNRVRDGSHPMPDIPHG) (removed in mature form; by autocatalysis). The Nucleophile role is filled by T53.

This sequence belongs to the peptidase T1B family. As to quaternary structure, the 20S proteasome core is composed of 14 alpha and 14 beta subunits that assemble into four stacked heptameric rings, resulting in a barrel-shaped structure. The two inner rings, each composed of seven catalytic beta subunits, are sandwiched by two outer rings, each composed of seven alpha subunits. The catalytic chamber with the active sites is on the inside of the barrel. Has a gated structure, the ends of the cylinder being occluded by the N-termini of the alpha-subunits. Is capped by the proteasome-associated ATPase, ARC.

It localises to the cytoplasm. The enzyme catalyses Cleavage of peptide bonds with very broad specificity.. The protein operates within protein degradation; proteasomal Pup-dependent pathway. The formation of the proteasomal ATPase ARC-20S proteasome complex, likely via the docking of the C-termini of ARC into the intersubunit pockets in the alpha-rings, may trigger opening of the gate for substrate entry. Interconversion between the open-gate and close-gate conformations leads to a dynamic regulation of the 20S proteasome proteolysis activity. Component of the proteasome core, a large protease complex with broad specificity involved in protein degradation. The chain is Proteasome subunit beta 2 from Thermomonospora curvata (strain ATCC 19995 / DSM 43183 / JCM 3096 / KCTC 9072 / NBRC 15933 / NCIMB 10081 / Henssen B9).